Consider the following 311-residue polypeptide: Mediator of RNA polymerase II transcription subunit 27 (311 aa).

It belongs to the Mediator complex subunit 27 family. In terms of assembly, component of the Mediator complex.

The protein localises to the nucleus. Component of the Mediator complex, a coactivator involved in the regulated transcription of nearly all RNA polymerase II-dependent genes. Mediator functions as a bridge to convey information from gene-specific regulatory proteins to the basal RNA polymerase II transcription machinery. Mediator is recruited to promoters by direct interactions with regulatory proteins and serves as a scaffold for the assembly of a functional preinitiation complex with RNA polymerase II and the general transcription factors. In Xenopus tropicalis (Western clawed frog), this protein is Mediator of RNA polymerase II transcription subunit 27 (med27).